The sequence spans 524 residues: 56 kDa type-specific antigen (524 aa).

A signal peptide spans 1–22 (MKKIMLIASAMSALSLPFSASA). The chain crosses the membrane as a helical span at residues 67–87 (LTTGLPFGGTLAAGMTIAPGF). 2 disordered regions span residues 112–132 (SKGE…RKRF) and 387–422 (EKLA…KGKE). 2 stretches are compositionally biased toward basic and acidic residues: residues 395–405 (EDAKNQGEGDC) and 413–422 (EKSKEGKGKE). The chain crosses the membrane as a helical span at residues 472-492 (TGMVASGALGVAINAAEGVYV).

Its subcellular location is the cell membrane. Its function is as follows. May be an adherent factor for rickettsial adsorption to the host-cell surface and a determinant of virulence of individual rickettsial strain. It is the major outer membrane protein. The protein is 56 kDa type-specific antigen of Orientia tsutsugamushi (Rickettsia tsutsugamushi).